The chain runs to 147 residues: Protein-export protein SecB 2 (147 aa).

Belongs to the SecB family. As to quaternary structure, homotetramer, a dimer of dimers. One homotetramer interacts with 1 SecA dimer.

It is found in the cytoplasm. Functionally, one of the proteins required for the normal export of preproteins out of the cell cytoplasm. It is a molecular chaperone that binds to a subset of precursor proteins, maintaining them in a translocation-competent state. It also specifically binds to its receptor SecA. This chain is Protein-export protein SecB 2, found in Francisella tularensis subsp. novicida (strain U112).